The following is a 281-amino-acid chain: NAD kinase (281 aa).

The active-site Proton acceptor is the Asp61. NAD(+) is bound by residues 61-62 (DG), 134-135 (ND), Arg145, Asp164, 175-180 (TAYSLS), and Gln234.

Belongs to the NAD kinase family. A divalent metal cation serves as cofactor.

Its subcellular location is the cytoplasm. It catalyses the reaction NAD(+) + ATP = ADP + NADP(+) + H(+). Its function is as follows. Involved in the regulation of the intracellular balance of NAD and NADP, and is a key enzyme in the biosynthesis of NADP. Catalyzes specifically the phosphorylation on 2'-hydroxyl of the adenosine moiety of NAD to yield NADP. The chain is NAD kinase from Clostridium botulinum (strain Loch Maree / Type A3).